Here is a 436-residue protein sequence, read N- to C-terminus: Diaminobutyrate--2-oxoglutarate transaminase (436 aa).

At Lys-269 the chain carries N6-(pyridoxal phosphate)lysine.

The protein belongs to the class-III pyridoxal-phosphate-dependent aminotransferase family. It depends on pyridoxal 5'-phosphate as a cofactor.

The catalysed reaction is L-2,4-diaminobutanoate + 2-oxoglutarate = L-aspartate 4-semialdehyde + L-glutamate. Its pathway is amine and polyamine biosynthesis; ectoine biosynthesis; L-ectoine from L-aspartate 4-semialdehyde: step 1/3. Functionally, catalyzes reversively the conversion of L-aspartate beta-semialdehyde (ASA) to L-2,4-diaminobutyrate (DABA) by transamination with L-glutamate. In Nocardia farcinica (strain IFM 10152), this protein is Diaminobutyrate--2-oxoglutarate transaminase (ectB).